The primary structure comprises 408 residues: Probable fructose-2,6-bisphosphatase C732.02c (408 aa).

Residue 16-24 participates in ATP binding; it reads GLPASGKTS. D88 is a catalytic residue. 127–132 provides a ligand contact to ATP; the sequence is NITDMC. Position 157 (Y157) interacts with beta-D-fructose 6-phosphate. R213 is a binding site for beta-D-fructose 2,6-bisphosphate. H214 acts as the Tele-phosphohistidine intermediate in catalysis. Beta-D-fructose 2,6-bisphosphate is bound by residues N220 and G226. The active-site Proton donor/acceptor is the E285. Positions 296, 310, 314, 325, 351, and 355 each coordinate beta-D-fructose 2,6-bisphosphate. 307-310 is an ATP binding site; the sequence is AELR. Residues 351–355 and Y387 each bind ATP; that span reads QAILR.

This sequence in the C-terminal section; belongs to the phosphoglycerate mutase family.

The catalysed reaction is beta-D-fructose 2,6-bisphosphate + H2O = beta-D-fructose 6-phosphate + phosphate. Its function is as follows. This is predominantly if not solely a fructose-2,6-bisphosphatase. This is Probable fructose-2,6-bisphosphatase C732.02c from Schizosaccharomyces pombe (strain 972 / ATCC 24843) (Fission yeast).